Here is a 142-residue protein sequence, read N- to C-terminus: Large ribosomal subunit protein uL11 (142 aa).

The protein belongs to the universal ribosomal protein uL11 family. In terms of assembly, part of the ribosomal stalk of the 50S ribosomal subunit. Interacts with L10 and the large rRNA to form the base of the stalk. L10 forms an elongated spine to which L12 dimers bind in a sequential fashion forming a multimeric L10(L12)X complex. Post-translationally, one or more lysine residues are methylated.

In terms of biological role, forms part of the ribosomal stalk which helps the ribosome interact with GTP-bound translation factors. The chain is Large ribosomal subunit protein uL11 from Tolumonas auensis (strain DSM 9187 / NBRC 110442 / TA 4).